A 357-amino-acid chain; its full sequence is Queuosine-tRNA galactosyltransferase (357 aa).

It belongs to the glycosyltransferase 2 family.

Its subcellular location is the cytoplasm. The catalysed reaction is queuosine(34) in tRNA(Tyr) + UDP-alpha-D-galactose = O-5''-beta-D-galactosylqueuosine(34) in tRNA(Tyr) + UDP + H(+). Its function is as follows. Glycosyltransferase that specifically catalyzes galactosylation of cytoplasmic tRNA(Tyr) modified with queuosine at position 34 (queuosine(34)). Galactosylates the cyclopentene hydroxyl group of queuosine(34) in tRNA(Tyr) to form galactosyl-queuosine(34). Mannosylation of queuosine(34) in tRNA(Tyr) is required to slow-down elongation at cognate codons UAC and suppress stop codon readthrough, thereby regulating protein translation. In Mus musculus (Mouse), this protein is Queuosine-tRNA galactosyltransferase.